The primary structure comprises 184 residues: Protein PPLZ12 (184 aa).

This is Protein PPLZ12 (PPLZ12) from Lupinus polyphyllus (Large-leaved lupine).